Reading from the N-terminus, the 646-residue chain is Zinc finger protein 503 (646 aa).

Residues 1–11 (MSTAPSLSALR) show a composition bias toward polar residues. Residues 1-70 (MSTAPSLSAL…PPSDPLRQAN (70 aa)) form a disordered region. Residues 16–28 (SGGGGGGGGGGGA) show a composition bias toward gly residues. Residues 34–52 (SALSGNSSGPGPGSSPAGS) are compositionally biased toward low complexity. Phosphoserine is present on Ser-102. The segment at 121–332 (SQIGKPDPSP…PSAPTSSSVL (212 aa)) is disordered. Low complexity predominate over residues 130 to 139 (PSSKLSSVAS). 2 stretches are compositionally biased toward gly residues: residues 140–152 (NGGG…GGAA) and 189–205 (GGGG…GGGV). Lys-209 carries the N6-acetyllysine modification. Polar residues predominate over residues 217-226 (ATCQPFTPRT). A compositionally biased stretch (low complexity) spans 227–240 (GSPSSSASACSPGG). 2 positions are modified to phosphoserine: Ser-231 and Ser-237. The segment covering 250–259 (EGKDDKKDTD) has biased composition (basic and acidic residues). Gly residues-rich tracts occupy residues 260–277 (VGGG…GGPT) and 300–315 (GGPG…GGSS). Residues 316–330 (GSSSGSGPSAPTSSS) are compositionally biased toward low complexity. Residues 514 to 542 (HICNWVSANGPCDKRFATSEELLSHLRTH) form a C2H2-type zinc finger. Omega-N-methylarginine is present on Arg-636.

It belongs to the Elbow/Noc family.

Its subcellular location is the nucleus. Its function is as follows. May function as a transcriptional repressor. This Homo sapiens (Human) protein is Zinc finger protein 503 (ZNF503).